Reading from the N-terminus, the 452-residue chain is Biotin carboxylase (452 aa).

The region spanning 1-445 (MFKKVLIANR…TTAFVTNHLK (445 aa)) is the Biotin carboxylation domain. Residues Lys-116, Lys-158, 164-165 (GG), 200-203 (EKAV), His-208, and His-235 contribute to the ATP site. The 198-residue stretch at 120-317 (RTAMQTAGVP…LVEWQLLIAA (198 aa)) folds into the ATP-grasp domain. Lys-237 contributes to the hydrogencarbonate binding site. Positions 275 and 288 each coordinate ATP. Mg(2+) contacts are provided by Glu-275, Glu-288, and Asn-290. Glu-275, Glu-288, and Asn-290 together coordinate Mn(2+). Arg-292, Val-295, and Arg-338 together coordinate hydrogencarbonate. Arg-292 is an active-site residue. Arg-338 is a binding site for biotin.

As to quaternary structure, acetyl-CoA carboxylase is a heterohexamer of biotin carboxyl carrier protein, biotin carboxylase and the two subunits of carboxyl transferase in a 2:2 complex. The cofactor is Mg(2+). Requires Mn(2+) as cofactor.

It catalyses the reaction N(6)-biotinyl-L-lysyl-[protein] + hydrogencarbonate + ATP = N(6)-carboxybiotinyl-L-lysyl-[protein] + ADP + phosphate + H(+). The protein operates within lipid metabolism; malonyl-CoA biosynthesis; malonyl-CoA from acetyl-CoA: step 1/1. In terms of biological role, this protein is a component of the acetyl coenzyme A carboxylase complex; first, biotin carboxylase catalyzes the carboxylation of the carrier protein and then the transcarboxylase transfers the carboxyl group to form malonyl-CoA. The polypeptide is Biotin carboxylase (accC) (Halalkalibacterium halodurans (strain ATCC BAA-125 / DSM 18197 / FERM 7344 / JCM 9153 / C-125) (Bacillus halodurans)).